A 352-amino-acid polypeptide reads, in one-letter code: Selenide, water dikinase (352 aa).

Residue cysteine 23 is part of the active site. Residues lysine 26 and 54–56 (SRD) each bind ATP. Mg(2+) is bound at residue aspartate 57. ATP contacts are provided by residues aspartate 74, aspartate 97, and 145-147 (GHS). Aspartate 97 contributes to the Mg(2+) binding site. Aspartate 233 contacts Mg(2+).

Belongs to the selenophosphate synthase 1 family. Class I subfamily. In terms of assembly, homodimer. Mg(2+) is required as a cofactor.

It catalyses the reaction hydrogenselenide + ATP + H2O = selenophosphate + AMP + phosphate + 2 H(+). Functionally, synthesizes selenophosphate from selenide and ATP. This is Selenide, water dikinase from Shewanella sp. (strain ANA-3).